The primary structure comprises 203 residues: tRNA (pseudouridine(54)-N(1))-methyltransferase (203 aa).

Residues Leu-135 and Gly-156 each coordinate S-adenosyl-L-methionine.

The protein belongs to the methyltransferase superfamily. TrmY family. As to quaternary structure, homodimer.

It localises to the cytoplasm. It carries out the reaction pseudouridine(54) in tRNA + S-adenosyl-L-methionine = N(1)-methylpseudouridine(54) in tRNA + S-adenosyl-L-homocysteine + H(+). Its function is as follows. Specifically catalyzes the N1-methylation of pseudouridine at position 54 (Psi54) in tRNAs. The polypeptide is tRNA (pseudouridine(54)-N(1))-methyltransferase (Thermococcus onnurineus (strain NA1)).